The following is a 517-amino-acid chain: Maturase K (517 aa).

It belongs to the intron maturase 2 family. MatK subfamily.

It is found in the plastid. The protein localises to the chloroplast. Its function is as follows. Usually encoded in the trnK tRNA gene intron. Probably assists in splicing its own and other chloroplast group II introns. This Acer pseudoplatanus (Sycamore maple) protein is Maturase K.